We begin with the raw amino-acid sequence, 510 residues long: uncharacterized protein (510 aa).

An N-terminal signal peptide occupies residues 1–19 (MLILLILYFLFLQLHIFDS). Residues 28 to 48 (IYIHYAICKFIFLLEIYKLIA) form a helical membrane-spanning segment.

The protein localises to the host membrane. This is an uncharacterized protein from Sulfolobus islandicus rod-shaped virus 1 (SIRV-1).